We begin with the raw amino-acid sequence, 245 residues long: Orotidine 5'-phosphate decarboxylase (245 aa).

Residues D22, K44, 71-80, T131, R192, Q201, G221, and R222 contribute to the substrate site; that span reads DLKFHDIPNT. Catalysis depends on K73, which acts as the Proton donor.

This sequence belongs to the OMP decarboxylase family. Type 1 subfamily. Homodimer.

It catalyses the reaction orotidine 5'-phosphate + H(+) = UMP + CO2. Its pathway is pyrimidine metabolism; UMP biosynthesis via de novo pathway; UMP from orotate: step 2/2. Catalyzes the decarboxylation of orotidine 5'-monophosphate (OMP) to uridine 5'-monophosphate (UMP). The sequence is that of Orotidine 5'-phosphate decarboxylase from Shigella flexneri.